The primary structure comprises 568 residues: Urease subunit alpha (568 aa).

One can recognise a Urease domain in the interval 130–568 (GGIDTHIHFI…LPMAQRYFLF (439 aa)). 3 residues coordinate Ni(2+): H135, H137, and K218. Position 218 is an N6-carboxylysine (K218). H220 provides a ligand contact to substrate. Ni(2+) is bound by residues H247 and H273. Residue H321 is the Proton donor of the active site. Ni(2+) is bound at residue D361.

The protein belongs to the metallo-dependent hydrolases superfamily. Urease alpha subunit family. As to quaternary structure, heterotrimer of UreA (gamma), UreB (beta) and UreC (alpha) subunits. Three heterotrimers associate to form the active enzyme. Ni cation is required as a cofactor. In terms of processing, carboxylation allows a single lysine to coordinate two nickel ions.

Its subcellular location is the cytoplasm. It carries out the reaction urea + 2 H2O + H(+) = hydrogencarbonate + 2 NH4(+). Its pathway is nitrogen metabolism; urea degradation; CO(2) and NH(3) from urea (urease route): step 1/1. The sequence is that of Urease subunit alpha from Burkholderia vietnamiensis (strain G4 / LMG 22486) (Burkholderia cepacia (strain R1808)).